The following is a 405-amino-acid chain: Acetate kinase (405 aa).

Asn-13 is a Mg(2+) binding site. Lys-20 lines the ATP pocket. Arg-94 is a substrate binding site. Residue Asp-153 is the Proton donor/acceptor of the active site. ATP contacts are provided by residues 213–217, 288–290, and 336–340; these read HLGNG, DFR, and GIGEN. Glu-390 contributes to the Mg(2+) binding site.

Belongs to the acetokinase family. As to quaternary structure, homodimer. The cofactor is Mg(2+). It depends on Mn(2+) as a cofactor.

The protein resides in the cytoplasm. It carries out the reaction acetate + ATP = acetyl phosphate + ADP. It functions in the pathway metabolic intermediate biosynthesis; acetyl-CoA biosynthesis; acetyl-CoA from acetate: step 1/2. Its function is as follows. Catalyzes the formation of acetyl phosphate from acetate and ATP. Can also catalyze the reverse reaction. The chain is Acetate kinase from Buchnera aphidicola subsp. Acyrthosiphon pisum (strain APS) (Acyrthosiphon pisum symbiotic bacterium).